The following is a 302-amino-acid chain: Large ribosomal subunit protein uL3c (302 aa).

A chloroplast-targeting transit peptide spans 1 to 36; that stretch reads MFQSSRLVALGLCAALVLVGGSIILSGLSPNLSSPM. Residues 208–239 are disordered; the sequence is FQGSIRRWGMKRGPMSHGSKSHRQHGSIGCSA.

It belongs to the universal ribosomal protein uL3 family. Part of the 50S ribosomal subunit.

It localises to the plastid. The protein localises to the chloroplast. In terms of biological role, one of the primary rRNA binding proteins, it binds directly near the 3'-end of the 23S rRNA, where it nucleates assembly of the 50S subunit. In Bigelowiella natans (Pedinomonas minutissima), this protein is Large ribosomal subunit protein uL3c (RPL3).